The primary structure comprises 486 residues: Arrestin-related trafficking adapter 10 (486 aa).

Belongs to the ART10 family.

It localises to the cytoplasm. In terms of biological role, may regulate endocytosis by recruiting RSP5 ubiquitin ligase activity to specific plasma membrane proteins in response to extracellular stimuli. This chain is Arrestin-related trafficking adapter 10 (ART10), found in Zygosaccharomyces rouxii (strain ATCC 2623 / CBS 732 / NBRC 1130 / NCYC 568 / NRRL Y-229).